Reading from the N-terminus, the 617-residue chain is Neopullulanase SusA (617 aa).

An N-terminal signal peptide occupies residues 1–22 (MKRNLLFIILLLLLPGLHQVFA). Ca(2+) contacts are provided by Asn-138, Asn-143, Asp-144, Gly-164, and Asp-166. Residues Asp-331 and Glu-360 contribute to the active site.

Belongs to the glycosyl hydrolase 13 family. Ca(2+) serves as cofactor.

It is found in the periplasm. It carries out the reaction Hydrolysis of pullulan to panose (6-alpha-D-glucosylmaltose).. The protein operates within glycan degradation; starch degradation. Functionally, neopullulanase that cleaves 1,4-alpha-glucosidic linkages in starch to produce disaccharides or trisaccharides in starch degradation. The sequence is that of Neopullulanase SusA (susA) from Bacteroides thetaiotaomicron (strain ATCC 29148 / DSM 2079 / JCM 5827 / CCUG 10774 / NCTC 10582 / VPI-5482 / E50).